Consider the following 245-residue polypeptide: 1-(5-phosphoribosyl)-5-[(5-phosphoribosylamino)methylideneamino] imidazole-4-carboxamide isomerase (245 aa).

Catalysis depends on D7, which acts as the Proton acceptor. The Proton donor role is filled by D129.

The protein belongs to the HisA/HisF family.

The protein resides in the cytoplasm. The enzyme catalyses 1-(5-phospho-beta-D-ribosyl)-5-[(5-phospho-beta-D-ribosylamino)methylideneamino]imidazole-4-carboxamide = 5-[(5-phospho-1-deoxy-D-ribulos-1-ylimino)methylamino]-1-(5-phospho-beta-D-ribosyl)imidazole-4-carboxamide. The protein operates within amino-acid biosynthesis; L-histidine biosynthesis; L-histidine from 5-phospho-alpha-D-ribose 1-diphosphate: step 4/9. This chain is 1-(5-phosphoribosyl)-5-[(5-phosphoribosylamino)methylideneamino] imidazole-4-carboxamide isomerase, found in Shewanella amazonensis (strain ATCC BAA-1098 / SB2B).